The following is a 117-amino-acid chain: Large ribosomal subunit protein bL20c (117 aa).

It belongs to the bacterial ribosomal protein bL20 family.

The protein resides in the plastid. In terms of biological role, binds directly to 23S ribosomal RNA and is necessary for the in vitro assembly process of the 50S ribosomal subunit. It is not involved in the protein synthesizing functions of that subunit. The sequence is that of Large ribosomal subunit protein bL20c (rpl20) from Euglena longa (Euglenophycean alga).